We begin with the raw amino-acid sequence, 312 residues long: MKLDRKDLLGLRDLSREETELILNTAIPMKDVICRDIKKVPTLRGKALVTVFYENSTRTRTSFELAGKYLSADTVNLSVSTSSVQKGESLRDTIKTIEVMGFDLMVMRHAMSGTPHYVARNTRMRVINAGDGANEHPTQALLDMYTIKEKKGTLESLKVAIVGDILHSRVARSNIYGLSKFGCDIRVVGPATLMPPGIEKLGVKSYYSLDEAINGVDVINILRIQRERQVSGLFPSLDEYAQLYMLSPQTLARAKDDVLVLHPGPINRGVEISSELADSAQALINEQVTNGVAIRMALLFLMMGGGRDEITY.

Carbamoyl phosphate contacts are provided by R58 and T59. K86 is a binding site for L-aspartate. Carbamoyl phosphate contacts are provided by R108, H136, and Q139. Positions 169 and 223 each coordinate L-aspartate. Positions 264 and 265 each coordinate carbamoyl phosphate.

Belongs to the aspartate/ornithine carbamoyltransferase superfamily. ATCase family. In terms of assembly, heterododecamer (2C3:3R2) of six catalytic PyrB chains organized as two trimers (C3), and six regulatory PyrI chains organized as three dimers (R2).

It catalyses the reaction carbamoyl phosphate + L-aspartate = N-carbamoyl-L-aspartate + phosphate + H(+). Its pathway is pyrimidine metabolism; UMP biosynthesis via de novo pathway; (S)-dihydroorotate from bicarbonate: step 2/3. In terms of biological role, catalyzes the condensation of carbamoyl phosphate and aspartate to form carbamoyl aspartate and inorganic phosphate, the committed step in the de novo pyrimidine nucleotide biosynthesis pathway. This Syntrophomonas wolfei subsp. wolfei (strain DSM 2245B / Goettingen) protein is Aspartate carbamoyltransferase catalytic subunit.